The primary structure comprises 248 residues: DNA repair protein RecO (248 aa).

Belongs to the RecO family.

In terms of biological role, involved in DNA repair and RecF pathway recombination. The chain is DNA repair protein RecO from Thermoanaerobacter sp. (strain X514).